The following is a 360-amino-acid chain: Phospho-N-acetylmuramoyl-pentapeptide-transferase (360 aa).

A run of 10 helical transmembrane segments spans residues 21–41, 73–93, 94–114, 145–165, 168–188, 199–219, 236–256, 263–283, 288–308, and 339–359; these read YLTL…LWLG, TMGG…WGDL, TNHY…IGWV, AVTL…VPLF, VVVP…VGSS, GLAI…AYAS, AGEL…FLWF, VFMG…VAVI, IVLF…MLQV, and IVRF…TLKI.

This sequence belongs to the glycosyltransferase 4 family. MraY subfamily. Mg(2+) serves as cofactor.

It is found in the cell inner membrane. The enzyme catalyses UDP-N-acetyl-alpha-D-muramoyl-L-alanyl-gamma-D-glutamyl-meso-2,6-diaminopimeloyl-D-alanyl-D-alanine + di-trans,octa-cis-undecaprenyl phosphate = di-trans,octa-cis-undecaprenyl diphospho-N-acetyl-alpha-D-muramoyl-L-alanyl-D-glutamyl-meso-2,6-diaminopimeloyl-D-alanyl-D-alanine + UMP. Its pathway is cell wall biogenesis; peptidoglycan biosynthesis. Functionally, catalyzes the initial step of the lipid cycle reactions in the biosynthesis of the cell wall peptidoglycan: transfers peptidoglycan precursor phospho-MurNAc-pentapeptide from UDP-MurNAc-pentapeptide onto the lipid carrier undecaprenyl phosphate, yielding undecaprenyl-pyrophosphoryl-MurNAc-pentapeptide, known as lipid I. This is Phospho-N-acetylmuramoyl-pentapeptide-transferase from Chromohalobacter salexigens (strain ATCC BAA-138 / DSM 3043 / CIP 106854 / NCIMB 13768 / 1H11).